A 270-amino-acid polypeptide reads, in one-letter code: Glucosamine-6-phosphate deaminase (270 aa).

The active-site Proton acceptor; for enolization step is D72. The active-site For ring-opening step is D141. Catalysis depends on H143, which acts as the Proton acceptor; for ring-opening step. The For ring-opening step role is filled by E148.

This sequence belongs to the glucosamine/galactosamine-6-phosphate isomerase family. NagB subfamily.

It carries out the reaction alpha-D-glucosamine 6-phosphate + H2O = beta-D-fructose 6-phosphate + NH4(+). Its pathway is amino-sugar metabolism; N-acetylneuraminate degradation; D-fructose 6-phosphate from N-acetylneuraminate: step 5/5. With respect to regulation, allosterically activated by N-acetylglucosamine 6-phosphate (GlcNAc6P). In terms of biological role, catalyzes the reversible isomerization-deamination of glucosamine 6-phosphate (GlcN6P) to form fructose 6-phosphate (Fru6P) and ammonium ion. This Bacteroides fragilis (strain ATCC 25285 / DSM 2151 / CCUG 4856 / JCM 11019 / LMG 10263 / NCTC 9343 / Onslow / VPI 2553 / EN-2) protein is Glucosamine-6-phosphate deaminase.